The sequence spans 214 residues: Large ribosomal subunit protein uL3 (214 aa).

N5-methylglutamine is present on Gln151.

This sequence belongs to the universal ribosomal protein uL3 family. Part of the 50S ribosomal subunit. Forms a cluster with proteins L14 and L19. In terms of processing, methylated by PrmB.

Functionally, one of the primary rRNA binding proteins, it binds directly near the 3'-end of the 23S rRNA, where it nucleates assembly of the 50S subunit. This is Large ribosomal subunit protein uL3 from Magnetococcus marinus (strain ATCC BAA-1437 / JCM 17883 / MC-1).